The primary structure comprises 734 residues: Photosystem I P700 chlorophyll a apoprotein A2 (734 aa).

A run of 8 helical transmembrane segments spans residues 46-69, 135-158, 175-199, 273-291, 330-353, 369-395, 417-439, and 517-535; these read IFASHFGQLAIIFLWTSGNLFHVA, LYTGALFLLFLSALSLIGGWLHLQ, LNHHLSGLFGVSSLAWTGHLVHVAI, MAHHHLAIAILFLIAGHMY, IHFQLGLALASLGVITSLVAQHMY, AALYTHHQYIAGFIMTGAFAHGAIFFI, AIISHLSWASLFLGFHTLGLYVH, and FLVHHAIALGLHTTTLILV. [4Fe-4S] cluster contacts are provided by Cys559 and Cys568. The next 2 membrane-spanning stretches (helical) occupy residues 575 to 596 and 643 to 665; these read AFYLAVFWMLNTIGWVTFYWHW and LSVWAWMFLFGHLVWATGFMFLI. Chlorophyll a-binding residues include His654, Met662, and Tyr670. Trp671 contacts phylloquinone. Residues 707 to 727 form a helical membrane-spanning segment; the sequence is LVGLAHFSVGYIFTYAAFLIA.

It belongs to the PsaA/PsaB family. As to quaternary structure, the PsaA/B heterodimer binds the P700 chlorophyll special pair and subsequent electron acceptors. PSI consists of a core antenna complex that captures photons, and an electron transfer chain that converts photonic excitation into a charge separation. The eukaryotic PSI reaction center is composed of at least 11 subunits. P700 is a chlorophyll a/chlorophyll a' dimer, A0 is one or more chlorophyll a, A1 is one or both phylloquinones and FX is a shared 4Fe-4S iron-sulfur center. is required as a cofactor.

The protein resides in the plastid. It localises to the chloroplast thylakoid membrane. The catalysed reaction is reduced [plastocyanin] + hnu + oxidized [2Fe-2S]-[ferredoxin] = oxidized [plastocyanin] + reduced [2Fe-2S]-[ferredoxin]. Functionally, psaA and PsaB bind P700, the primary electron donor of photosystem I (PSI), as well as the electron acceptors A0, A1 and FX. PSI is a plastocyanin-ferredoxin oxidoreductase, converting photonic excitation into a charge separation, which transfers an electron from the donor P700 chlorophyll pair to the spectroscopically characterized acceptors A0, A1, FX, FA and FB in turn. Oxidized P700 is reduced on the lumenal side of the thylakoid membrane by plastocyanin. In Capsella bursa-pastoris (Shepherd's purse), this protein is Photosystem I P700 chlorophyll a apoprotein A2.